The chain runs to 338 residues: Phosphatidylglycerol--prolipoprotein diacylglyceryl transferase (338 aa).

4 helical membrane-spanning segments follow: residues 24-44, 67-87, 115-135, and 141-161; these read WYGL…SYQV, LFIW…TLVY, GFQG…VILW, and FKFA…YTFG. Arg162 is an a 1,2-diacyl-sn-glycero-3-phospho-(1'-sn-glycerol) binding site. 3 helical membrane-spanning segments follow: residues 224–244, 252–272, and 304–324; these read PSQL…LWLL, GFLV…IEYF, and GQIL…ILYL.

This sequence belongs to the Lgt family.

The protein resides in the cell inner membrane. It catalyses the reaction L-cysteinyl-[prolipoprotein] + a 1,2-diacyl-sn-glycero-3-phospho-(1'-sn-glycerol) = an S-1,2-diacyl-sn-glyceryl-L-cysteinyl-[prolipoprotein] + sn-glycerol 1-phosphate + H(+). Its pathway is protein modification; lipoprotein biosynthesis (diacylglyceryl transfer). Its function is as follows. Catalyzes the transfer of the diacylglyceryl group from phosphatidylglycerol to the sulfhydryl group of the N-terminal cysteine of a prolipoprotein, the first step in the formation of mature lipoproteins. In Treponema denticola (strain ATCC 35405 / DSM 14222 / CIP 103919 / JCM 8153 / KCTC 15104), this protein is Phosphatidylglycerol--prolipoprotein diacylglyceryl transferase.